The sequence spans 336 residues: CASP-like protein UU1 (336 aa).

At 1 to 170 (MGKGPGLDPS…PAMESNKDDN (170 aa)) the chain is on the cytoplasmic side. A helical membrane pass occupies residues 171 to 191 (FFGAIVLSLRAAQIVFTVVGL). The Extracellular portion of the chain corresponds to 192–222 (GVMGSLKHTSHGDYYYYYYDFSFTQVDSYIG). Residues 223-243 (VLSLDVIVCLYAIVQLVLCFI) form a helical membrane-spanning segment. At 244 to 261 (QRSNQGKYLSSPTTVAAK) the chain is on the cytoplasmic side. The chain crosses the membrane as a helical span at residues 262–282 (LTFVFDQVLAYALVATAGAAA). Residues 283 to 307 (GSALEIRKGTSCSGTWTVICSKGEA) are Extracellular-facing. The helical transmembrane segment at 308-328 (SVAMSFFAFAFLAATAAVYSV) threads the bilayer. The Cytoplasmic portion of the chain corresponds to 329 to 336 (RLLRITGR).

The protein belongs to the Casparian strip membrane proteins (CASP) family. As to quaternary structure, homodimer and heterodimers.

The protein localises to the cell membrane. The chain is CASP-like protein UU1 from Physcomitrium patens (Spreading-leaved earth moss).